The sequence spans 149 residues: MTATLRAFGWLAAFALTVTFAQGAAAEEQQKGKVGAKPVETGVVIRGVTLAGPVGNPGTSTGKTCDFSGEPVDPSGRLEGASVNCRPNGNQANTTPGLPARFNAYCMINAPVKSARLIQAARPENANHCDLSGITPKDATGQFGGAVWR.

The N-terminal stretch at 1-23 is a signal peptide; sequence MTATLRAFGWLAAFALTVTFAQG.

The protein localises to the periplasm. Its function is as follows. May be involved in plant-microbe interaction. In Rhizobium leguminosarum bv. viciae, this protein is Protein RhiC (rhiC).